Reading from the N-terminus, the 343-residue chain is MVVVGIVGASGYTGGELLRLLARHPEVEEVRYATSRRLEGKPVWKVHPNLRRDYPDLEFSDPDPVEIGEDCDVVFTAVPHTAAMELVPDLLEGGAVVIDLSADFRFDDVDVYEEWYGVEHAAPELNDEAVYGLPELHRDEIRRTDLIANPGCYPTGAILAAAPLVEEGLVDVVIFDSKSGTSGAGAKPSEVTHHPECAEDLTPYNPTDHRHLPEIRQELGKLGDVEVHFTPHLAPLVRGIETTAHGLGDVEIEPKELRELYVEYYDGEPFIRVCEVGEAPRLWAVRGTNYCDVGVFAVGDGRVVVASAIDNLTKGASGQAIQNMNVRFGFEETAGLEEPGYHP.

The active site involves C152.

The protein belongs to the NAGSA dehydrogenase family. Type 1 subfamily.

The protein resides in the cytoplasm. It catalyses the reaction N-acetyl-L-glutamate 5-semialdehyde + phosphate + NADP(+) = N-acetyl-L-glutamyl 5-phosphate + NADPH + H(+). The protein operates within amino-acid biosynthesis; L-arginine biosynthesis; N(2)-acetyl-L-ornithine from L-glutamate: step 3/4. Its function is as follows. Catalyzes the NADPH-dependent reduction of N-acetyl-5-glutamyl phosphate to yield N-acetyl-L-glutamate 5-semialdehyde. This Methanopyrus kandleri (strain AV19 / DSM 6324 / JCM 9639 / NBRC 100938) protein is N-acetyl-gamma-glutamyl-phosphate reductase.